A 447-amino-acid polypeptide reads, in one-letter code: MYLHLTALCVVIPLCYGASMFKHDHYMDNGVRYPNGDGICKQLNETKCDAGFSYDRSICEGPHYWHTISKCFIACGIGQRQSPINIVSYDAKFRQRLPKLKFKPHMEKLKTEVTNHQNRAPEFEPEDGENLYVKLNNLVDGHYKFHNLHVHNGRTRRKGSEHSVNGRFTPMEAHLVFHHDDQTHFEPTRTKLGGAFPGHNDFVVVGVFLEVGDDGFGDEPDDEECKHILKGHHPDNNENGNGDNGNNGYNGDNGNNGDNGNNSYNGDNGNNGVNGNNGYNGDNGNNGDNGNNGYNGDNGNNGDNGNNGENGNNGENGNNGENGHKHGCRVKKAKHLSRILECAYRNDKVREFKKVGEEEGLDVHLTPEMALPPLKYRHYYTYEGSLTTPPCTESVLWVVQKCHVQVSRRVLHALRNVEGYKDGTTLRKYGTRRPTQKNKVTVYKSFK.

The signal sequence occupies residues 1-17; that stretch reads MYLHLTALCVVIPLCYG. An N-linked (GlcNAc...) asparagine glycan is attached at N44. In terms of domain architecture, Alpha-carbonic anhydrase spans 50–446; that stretch reads AGFSYDRSIC…KNKVTVYKSF (397 aa). The Zn(2+) site is built by H149, H151, and H174. The tract at residues 218-329 is disordered; the sequence is DEPDDEECKH…GENGHKHGCR (112 aa). Residues 224 to 236 are compositionally biased toward basic and acidic residues; it reads ECKHILKGHHPDN. The segment covering 237–321 has biased composition (low complexity); the sequence is NENGNGDNGN…NNGENGNNGE (85 aa). Repeat copies occupy residues 242-244, 245-247, 248-250, 251-253, 254-256, 257-259, 260-262, 263-265, 266-268, 269-271, 272-274, 275-277, 278-280, 281-283, 284-286, 287-289, 290-292, 293-295, 296-298, 299-301, 302-304, 305-307, 308-310, 311-313, 314-316, 317-318, and 320-322. A 27 X 3 AA approximate tandem repeats of G-X-N region spans residues 242-322; it reads GDNGNNGYNG…NGENGNNGEN (81 aa). A glycan (N-linked (GlcNAc...) asparagine) is linked at N261. 387 to 388 provides a ligand contact to substrate; sequence TT.

Belongs to the alpha-carbonic anhydrase family. As to quaternary structure, homooligomer; disulfide-linked. May also be disulfide-linked to insoluble organic matrix. It depends on Zn(2+) as a cofactor. In terms of processing, N-glycosylated. Expressed at whole regions of the mantle epithelium tissue. Is found in the aragonitic nacreous and calcitic prismatic and foliated layers.

The protein localises to the secreted. It is found in the extracellular space. It localises to the extracellular matrix. It carries out the reaction hydrogencarbonate + H(+) = CO2 + H2O. Its function is as follows. Acts as a negative regulator for calcification in the shells of mollusks. May function both as a calcium concentrator and as a carbonic anhydrase required for production of carbonate ions, which are assembled to CaCO(3) at mineralization sites. Is important for shell formation in both the calcitic prismatic layer and the aragonitic nacreous layer. This chain is Nacrein, found in Pinctada fucata (Akoya pearl oyster).